The chain runs to 413 residues: Imidazolonepropionase (413 aa).

The Fe(3+) site is built by histidine 77 and histidine 79. 2 residues coordinate Zn(2+): histidine 77 and histidine 79. Residues arginine 86, tyrosine 149, and histidine 182 each coordinate 4-imidazolone-5-propanoate. Residue tyrosine 149 coordinates N-formimidoyl-L-glutamate. Histidine 247 is a Fe(3+) binding site. Histidine 247 provides a ligand contact to Zn(2+). Glutamine 250 contacts 4-imidazolone-5-propanoate. Aspartate 322 serves as a coordination point for Fe(3+). Zn(2+) is bound at residue aspartate 322. Residues asparagine 324 and glycine 326 each contribute to the N-formimidoyl-L-glutamate site. Position 327 (threonine 327) interacts with 4-imidazolone-5-propanoate.

Belongs to the metallo-dependent hydrolases superfamily. HutI family. It depends on Zn(2+) as a cofactor. The cofactor is Fe(3+).

It localises to the cytoplasm. It catalyses the reaction 4-imidazolone-5-propanoate + H2O = N-formimidoyl-L-glutamate. The protein operates within amino-acid degradation; L-histidine degradation into L-glutamate; N-formimidoyl-L-glutamate from L-histidine: step 3/3. Catalyzes the hydrolytic cleavage of the carbon-nitrogen bond in imidazolone-5-propanoate to yield N-formimidoyl-L-glutamate. It is the third step in the universal histidine degradation pathway. This is Imidazolonepropionase from Chromobacterium violaceum (strain ATCC 12472 / DSM 30191 / JCM 1249 / CCUG 213 / NBRC 12614 / NCIMB 9131 / NCTC 9757 / MK).